We begin with the raw amino-acid sequence, 873 residues long: Bifunctional uridylyltransferase/uridylyl-removing enzyme (873 aa).

The tract at residues 1–332 (MKYLSPLSLS…HQGEQDDAII (332 aa)) is uridylyltransferase. The segment at 333 to 692 (IDDDFQRRGR…ISKNASRGGT (360 aa)) is uridylyl-removing. Residues 451–573 (VDEHSIRLLK…VRDEERLDYL (123 aa)) enclose the HD domain. 2 ACT domains span residues 693–777 (EIFV…RPPR) and 800–873 (LMEF…RLSS).

It belongs to the GlnD family. The cofactor is Mg(2+).

It carries out the reaction [protein-PII]-L-tyrosine + UTP = [protein-PII]-uridylyl-L-tyrosine + diphosphate. The enzyme catalyses [protein-PII]-uridylyl-L-tyrosine + H2O = [protein-PII]-L-tyrosine + UMP + H(+). With respect to regulation, uridylyltransferase (UTase) activity is inhibited by glutamine, while glutamine activates uridylyl-removing (UR) activity. Its function is as follows. Modifies, by uridylylation and deuridylylation, the PII regulatory proteins (GlnB and homologs), in response to the nitrogen status of the cell that GlnD senses through the glutamine level. Under low glutamine levels, catalyzes the conversion of the PII proteins and UTP to PII-UMP and PPi, while under higher glutamine levels, GlnD hydrolyzes PII-UMP to PII and UMP (deuridylylation). Thus, controls uridylylation state and activity of the PII proteins, and plays an important role in the regulation of nitrogen assimilation and metabolism. The chain is Bifunctional uridylyltransferase/uridylyl-removing enzyme from Aliivibrio fischeri (strain ATCC 700601 / ES114) (Vibrio fischeri).